Reading from the N-terminus, the 416-residue chain is 2,3-bisphosphoglycerate-independent phosphoglycerate mutase (416 aa).

It belongs to the BPG-independent phosphoglycerate mutase family. A-PGAM subfamily.

It carries out the reaction (2R)-2-phosphoglycerate = (2R)-3-phosphoglycerate. It participates in carbohydrate degradation; glycolysis; pyruvate from D-glyceraldehyde 3-phosphate: step 3/5. Functionally, catalyzes the interconversion of 2-phosphoglycerate and 3-phosphoglycerate. This is 2,3-bisphosphoglycerate-independent phosphoglycerate mutase from Ignicoccus hospitalis (strain KIN4/I / DSM 18386 / JCM 14125).